The primary structure comprises 265 residues: Pancreas transcription factor 1 subunit alpha (265 aa).

The bHLH domain maps to 115 to 167 (QLRQAANVRERRRMQSINDAFEGLRSHIPTLPYEKRLSKVDTLRLAIGYINFL).

The protein localises to the nucleus. Its function is as follows. Transcription factor implicated in the cell fate determination in various organs. Binds to the E-box consensus sequence 5'-CANNTG-3'. Required for exocrine pancreatic development. Plays a central role in directing the differentiation of retinal progenitors towards horizontal and amacrine fates. This Danio rerio (Zebrafish) protein is Pancreas transcription factor 1 subunit alpha (ptf1a).